Consider the following 210-residue polypeptide: Silenced mating-type protein ALPHA2 (210 aa).

Residue Met-1 is modified to N-acetylmethionine. The N-terminal domain stretch occupies residues 1–102 (MNKIPIKDLL…RSIENDRSNY (102 aa)). Residues 103–128 (QLTQKNKSADGLVFNVVTQDMINKST) are flexible linker. Positions 129–191 (KPYRGHRFTK…NRRRKEKTIT (63 aa)) form a DNA-binding region, homeobox; TALE-type. Positions 190 to 210 (ITIAPELADLLSGEPLAKKKE) are C-terminal tail.

Belongs to the TALE/M-ATYP homeobox family.

It localises to the nucleus. Mating type proteins are sequence specific DNA-binding proteins that act as master switches in yeast differentiation by controlling gene expression in a cell type-specific fashion. Silenced copy of ALPHA2 at HML. This Saccharomyces cerevisiae (strain ATCC 204508 / S288c) (Baker's yeast) protein is Silenced mating-type protein ALPHA2 (HMLALPHA2).